The primary structure comprises 517 residues: Zinc finger protein 215 (517 aa).

An SCAN box domain is found at 48-126 (RQKFRHFQYL…EDMVTLIEDV (79 aa)). A KRAB domain is found at 164–237 (VTFKDVVVEF…EKEIPRKTIF (74 aa)). 4 consecutive C2H2-type zinc fingers follow at residues 379-401 (YECY…QIIH), 407-429 (YKCS…QKLH), 462-484 (YECV…QMIH), and 490-512 (FKCK…QKLH).

It belongs to the krueppel C2H2-type zinc-finger protein family.

It is found in the nucleus. In terms of biological role, may be involved in transcriptional regulation. The chain is Zinc finger protein 215 (ZNF215) from Pongo abelii (Sumatran orangutan).